Here is a 126-residue protein sequence, read N- to C-terminus: Holo-[acyl-carrier-protein] synthase (126 aa).

2 residues coordinate Mg(2+): Asp9 and Glu58.

It belongs to the P-Pant transferase superfamily. AcpS family. Mg(2+) is required as a cofactor.

The protein resides in the cytoplasm. It carries out the reaction apo-[ACP] + CoA = holo-[ACP] + adenosine 3',5'-bisphosphate + H(+). Functionally, transfers the 4'-phosphopantetheine moiety from coenzyme A to a Ser of acyl-carrier-protein. The protein is Holo-[acyl-carrier-protein] synthase of Escherichia coli O139:H28 (strain E24377A / ETEC).